Consider the following 430-residue polypeptide: 3-phosphoshikimate 1-carboxyvinyltransferase (430 aa).

3-phosphoshikimate-binding residues include Lys21, Ser22, and Arg26. Position 21 (Lys21) interacts with phosphoenolpyruvate. Phosphoenolpyruvate is bound by residues Gly95 and Arg123. Residues Thr167, Gln169, Asp315, and Lys342 each coordinate 3-phosphoshikimate. Phosphoenolpyruvate is bound at residue Gln169. Asp315 (proton acceptor) is an active-site residue. The phosphoenolpyruvate site is built by Arg346 and Arg390.

It belongs to the EPSP synthase family. Monomer.

The protein localises to the cytoplasm. It catalyses the reaction 3-phosphoshikimate + phosphoenolpyruvate = 5-O-(1-carboxyvinyl)-3-phosphoshikimate + phosphate. It participates in metabolic intermediate biosynthesis; chorismate biosynthesis; chorismate from D-erythrose 4-phosphate and phosphoenolpyruvate: step 6/7. Functionally, catalyzes the transfer of the enolpyruvyl moiety of phosphoenolpyruvate (PEP) to the 5-hydroxyl of shikimate-3-phosphate (S3P) to produce enolpyruvyl shikimate-3-phosphate and inorganic phosphate. The protein is 3-phosphoshikimate 1-carboxyvinyltransferase of Endomicrobium trichonymphae.